Here is a 157-residue protein sequence, read N- to C-terminus: Protein Smg homolog (157 aa).

Belongs to the Smg family.

This is Protein Smg homolog from Tolumonas auensis (strain DSM 9187 / NBRC 110442 / TA 4).